Consider the following 413-residue polypeptide: Adenylosuccinate synthetase (413 aa).

GTP contacts are provided by residues 11–17 and 39–41; these read GDEGKGK and GHT. Asp12 (proton acceptor) is an active-site residue. Mg(2+) is bound by residues Asp12 and Gly39. IMP contacts are provided by residues 12–15, 37–40, Thr125, Arg139, Gln217, Thr232, and Arg296; these read DEGK and NAGH. The Proton donor role is filled by His40. 292-298 contacts substrate; that stretch reads TTTGRPR. GTP contacts are provided by residues Arg298, 324–326, and 402–404; these read KLD and STG.

Belongs to the adenylosuccinate synthetase family. In terms of assembly, homodimer. Requires Mg(2+) as cofactor.

Its subcellular location is the cytoplasm. The catalysed reaction is IMP + L-aspartate + GTP = N(6)-(1,2-dicarboxyethyl)-AMP + GDP + phosphate + 2 H(+). It functions in the pathway purine metabolism; AMP biosynthesis via de novo pathway; AMP from IMP: step 1/2. Plays an important role in the de novo pathway of purine nucleotide biosynthesis. Catalyzes the first committed step in the biosynthesis of AMP from IMP. In Nautilia profundicola (strain ATCC BAA-1463 / DSM 18972 / AmH), this protein is Adenylosuccinate synthetase.